Here is a 256-residue protein sequence, read N- to C-terminus: Small ribosomal subunit protein uS2 (256 aa).

It belongs to the universal ribosomal protein uS2 family.

This is Small ribosomal subunit protein uS2 from Brucella anthropi (strain ATCC 49188 / DSM 6882 / CCUG 24695 / JCM 21032 / LMG 3331 / NBRC 15819 / NCTC 12168 / Alc 37) (Ochrobactrum anthropi).